A 150-amino-acid chain; its full sequence is MQIILLDNVSNLGKLGEQVNVKAGYARNYLVPQGKAVPATRKNVEYFEKCRVELVAKLANIKSAAEARANKINELGSITILSKAGEEGKLFGSIGTRDIANAISMAGINTKKSEVRLPNGVLRTTGNHIVSIRIHSDISVAINVLVIAEK.

The protein belongs to the bacterial ribosomal protein bL9 family.

Functionally, binds to the 23S rRNA. This is Large ribosomal subunit protein bL9 from Baumannia cicadellinicola subsp. Homalodisca coagulata.